A 91-amino-acid polypeptide reads, in one-letter code: DNA-directed RNA polymerase subunit omega (91 aa).

This sequence belongs to the RNA polymerase subunit omega family. In terms of assembly, the RNAP catalytic core consists of 2 alpha, 1 beta, 1 beta' and 1 omega subunit. When a sigma factor is associated with the core the holoenzyme is formed, which can initiate transcription.

It catalyses the reaction RNA(n) + a ribonucleoside 5'-triphosphate = RNA(n+1) + diphosphate. Functionally, promotes RNA polymerase assembly. Latches the N- and C-terminal regions of the beta' subunit thereby facilitating its interaction with the beta and alpha subunits. In Pectobacterium atrosepticum (strain SCRI 1043 / ATCC BAA-672) (Erwinia carotovora subsp. atroseptica), this protein is DNA-directed RNA polymerase subunit omega.